Reading from the N-terminus, the 409-residue chain is Gamma-glutamyl phosphate reductase (409 aa).

It belongs to the gamma-glutamyl phosphate reductase family.

The protein resides in the cytoplasm. The catalysed reaction is L-glutamate 5-semialdehyde + phosphate + NADP(+) = L-glutamyl 5-phosphate + NADPH + H(+). It functions in the pathway amino-acid biosynthesis; L-proline biosynthesis; L-glutamate 5-semialdehyde from L-glutamate: step 2/2. Catalyzes the NADPH-dependent reduction of L-glutamate 5-phosphate into L-glutamate 5-semialdehyde and phosphate. The product spontaneously undergoes cyclization to form 1-pyrroline-5-carboxylate. In Koribacter versatilis (strain Ellin345), this protein is Gamma-glutamyl phosphate reductase.